The primary structure comprises 237 residues: Purine nucleoside phosphorylase DeoD-type (237 aa).

H4 contacts a purine D-ribonucleoside. Residues G20, R24, R43, and 87–90 each bind phosphate; that span reads RVGT. A purine D-ribonucleoside is bound by residues 179–181 and 203–204; these read EME and SD. D204 acts as the Proton donor in catalysis.

The protein belongs to the PNP/UDP phosphorylase family. In terms of assembly, homohexamer; trimer of homodimers.

The catalysed reaction is a purine D-ribonucleoside + phosphate = a purine nucleobase + alpha-D-ribose 1-phosphate. The enzyme catalyses a purine 2'-deoxy-D-ribonucleoside + phosphate = a purine nucleobase + 2-deoxy-alpha-D-ribose 1-phosphate. Functionally, catalyzes the reversible phosphorolytic breakdown of the N-glycosidic bond in the beta-(deoxy)ribonucleoside molecules, with the formation of the corresponding free purine bases and pentose-1-phosphate. The protein is Purine nucleoside phosphorylase DeoD-type of Streptococcus gordonii (strain Challis / ATCC 35105 / BCRC 15272 / CH1 / DL1 / V288).